A 128-amino-acid polypeptide reads, in one-letter code: Large ribosomal subunit protein uL22 (128 aa).

Belongs to the universal ribosomal protein uL22 family. Part of the 50S ribosomal subunit.

This protein binds specifically to 23S rRNA; its binding is stimulated by other ribosomal proteins, e.g. L4, L17, and L20. It is important during the early stages of 50S assembly. It makes multiple contacts with different domains of the 23S rRNA in the assembled 50S subunit and ribosome. In terms of biological role, the globular domain of the protein is located near the polypeptide exit tunnel on the outside of the subunit, while an extended beta-hairpin is found that lines the wall of the exit tunnel in the center of the 70S ribosome. This Nitrobacter hamburgensis (strain DSM 10229 / NCIMB 13809 / X14) protein is Large ribosomal subunit protein uL22.